A 287-amino-acid polypeptide reads, in one-letter code: Cell division protein ZipA (287 aa).

A topological domain (periplasmic) is located at residue methionine 1. A helical transmembrane segment spans residues 2-22; it reads EIGLREWLIVIGIIVIAGILF. Residues 23 to 287 are Cytoplasmic-facing; sequence DGWRRMRGSK…ERRALTQRRG (265 aa). The tract at residues 48–140 is disordered; that stretch reads DEEETTSAEV…PTQRITEDKD (93 aa). 3 stretches are compositionally biased toward basic and acidic residues: residues 64 to 77, 85 to 104, and 121 to 140; these read LDTH…EHDL, REGK…KDEP, and GRDD…EDKD.

It belongs to the ZipA family. As to quaternary structure, interacts with FtsZ via their C-terminal domains.

It localises to the cell inner membrane. Functionally, essential cell division protein that stabilizes the FtsZ protofilaments by cross-linking them and that serves as a cytoplasmic membrane anchor for the Z ring. Also required for the recruitment to the septal ring of downstream cell division proteins. This Pseudomonas syringae pv. syringae (strain B728a) protein is Cell division protein ZipA.